The following is a 1024-amino-acid chain: Error-prone DNA polymerase (1024 aa).

Belongs to the DNA polymerase type-C family. DnaE2 subfamily.

The protein resides in the cytoplasm. The catalysed reaction is DNA(n) + a 2'-deoxyribonucleoside 5'-triphosphate = DNA(n+1) + diphosphate. In terms of biological role, DNA polymerase involved in damage-induced mutagenesis and translesion synthesis (TLS). It is not the major replicative DNA polymerase. This chain is Error-prone DNA polymerase, found in Vibrio vulnificus (strain CMCP6).